Reading from the N-terminus, the 214-residue chain is Adenylate kinase (214 aa).

10 to 15 (GAGKGT) contacts ATP. Positions 30–59 (STGDMLRAAVKAQSELGRQAKALMDAGKLV) are NMP. AMP-binding positions include T31, R36, 57–59 (KLV), 85–88 (GFPR), and Q92. The tract at residues 122–159 (GRRVHAPSGRVYHVKFNPPKQEGKDDVTGELLTSRKDD) is LID. ATP-binding positions include R123 and 132–133 (VY). 2 residues coordinate AMP: R156 and R167. R200 is an ATP binding site.

It belongs to the adenylate kinase family. As to quaternary structure, monomer.

Its subcellular location is the cytoplasm. The catalysed reaction is AMP + ATP = 2 ADP. The protein operates within purine metabolism; AMP biosynthesis via salvage pathway; AMP from ADP: step 1/1. In terms of biological role, catalyzes the reversible transfer of the terminal phosphate group between ATP and AMP. Plays an important role in cellular energy homeostasis and in adenine nucleotide metabolism. The polypeptide is Adenylate kinase (Sodalis glossinidius (strain morsitans)).